The chain runs to 141 residues: Large ribosomal subunit protein uL11 (141 aa).

Belongs to the universal ribosomal protein uL11 family. As to quaternary structure, part of the ribosomal stalk of the 50S ribosomal subunit. Interacts with L10 and the large rRNA to form the base of the stalk. L10 forms an elongated spine to which L12 dimers bind in a sequential fashion forming a multimeric L10(L12)X complex. One or more lysine residues are methylated.

Forms part of the ribosomal stalk which helps the ribosome interact with GTP-bound translation factors. The chain is Large ribosomal subunit protein uL11 from Selenomonas ruminantium.